The following is a 269-amino-acid chain: Meiotically up-regulated gene 43 protein (269 aa).

It is found in the mitochondrion. Functionally, has a role in meiosis. In Schizosaccharomyces pombe (strain 972 / ATCC 24843) (Fission yeast), this protein is Meiotically up-regulated gene 43 protein (mug43).